The chain runs to 394 residues: Trans-enoyl reductase fumoC (394 aa).

An NADP(+)-binding site is contributed by 62 to 65 (VDGK). 152–159 (ASLASVGM) contacts substrate. Residues 224 to 227 (SSSS), tyrosine 242, and 289 to 290 (LD) contribute to the NADP(+) site. 309-313 (TLTQF) provides a ligand contact to substrate. An NADP(+)-binding site is contributed by 378–379 (VK).

It belongs to the zinc-containing alcohol dehydrogenase family. In terms of assembly, monomer.

It participates in secondary metabolite biosynthesis. Functionally, trans-enoyl reductase; part of the gene cluster that mediates the biosynthesis of fumosorinone, a 2-pyridone alkaloid that acts as an inhibitor of protein tyrosine phosphatase 1B which is implicated asa negative regulator of insulin receptor signaling and a potential drug target for the treatment of type II diabetes and other associated metabolic syndromes. The polyketide-amino acid backbone of fumosorinone is first assembled by the PKS-NRPS hybrid fumoS. The PKS modules condense one acetyl-CoA starter unit with 7 malonyl-CoA units, programmed C-methylations occurring after the first 3 and the sixth extensions, and cycles of full reduction occurring after the first 2 extensions. Because fumoS lacks a designated enoyl reductase (ER) domain, the required activity is provided the enoyl reductase fumoC. Upon formation of the polyketide backbone on the thiotemplate, the polyketide is transferred to the NRPS module and linked to tyrosine to produce the acyltetramic acid intermediate called prefumosorinone A. The cytochrome P450 monooxygenase fumoA then probably catalyzes an unprecedented oxidative ring expansion of prefumosorinone A to form prefumosorinone B which contains the 2-pyridone core of fumosorinone. The cytochrome P450 monooxygenase fumoB might hydroxylate the nitrogen of prefumosorinone B, but not the acyltetramic acid prefumosorinone A, to form fumosorinone. The polypeptide is Trans-enoyl reductase fumoC (Cordyceps fumosorosea (strain ARSEF 2679) (Isaria fumosorosea)).